Here is a 133-residue protein sequence, read N- to C-terminus: DNA-directed RNA polymerase subunit omega (133 aa).

It belongs to the RNA polymerase subunit omega family. As to quaternary structure, the RNAP catalytic core consists of 2 alpha, 1 beta, 1 beta' and 1 omega subunit. When a sigma factor is associated with the core the holoenzyme is formed, which can initiate transcription.

It catalyses the reaction RNA(n) + a ribonucleoside 5'-triphosphate = RNA(n+1) + diphosphate. Its function is as follows. Promotes RNA polymerase assembly. Latches the N- and C-terminal regions of the beta' subunit thereby facilitating its interaction with the beta and alpha subunits. In Brucella abortus (strain S19), this protein is DNA-directed RNA polymerase subunit omega.